A 270-amino-acid chain; its full sequence is MSTHSSISQPPLPLAGRVAIVTGSSRGIGRAIAIHLAELGARIVINYTSKAADAERVASEINDFPVREEITGKGPRAIVVQANVSEPSQVKSMFDAAESAFEAPVHILVNSAGILDPKYPTIADTSVEDFDHTFSVNTKGAFLCSKEAANRLKQGGGGRIILLTSSQTRSLKPGFGAYAASKAAVETMVKILAKELKGTGITANCVAPGPIATEMFFDGKTPELVEKIAAESPFGRVGEAKDVVPLVGFLAGDGGEWVNGQIIPVNGGYV.

The transit peptide at 1–53 (MSTHSSISQPPLPLAGRVAIVTGSSRGIGRAIAIHLAELGARIVINYTSKAAD) directs the protein to the chloroplast. 26–50 (RGIGRAIAIHLAELGARIVINYTSK) provides a ligand contact to NADP(+). Ser-165 provides a ligand contact to substrate. Residue Tyr-178 is the Proton acceptor of the active site.

This sequence belongs to the short-chain dehydrogenases/reductases (SDR) family.

Its subcellular location is the plastid. It localises to the chloroplast. Functionally, aldehyde reductase that catalyzes the reduction of the aldehyde carbonyl groups on saturated and alpha,beta-unsaturated aldehydes with more than 5 carbons. This chain is NADPH-dependent aldehyde reductase-like protein, chloroplastic, found in Arabidopsis thaliana (Mouse-ear cress).